A 238-amino-acid polypeptide reads, in one-letter code: Ethylene-responsive transcription factor ERN3 (238 aa).

Positions 24–81 form a DNA-binding region, AP2/ERF; it reads KFVGVRQRASGKWAAEIKDTSKNIRMWLGTYKTAEEAARAYDEAAFLLRGTNTRTNFS.

It belongs to the AP2/ERF transcription factor family. ERF subfamily. Expressed in roots, root hairs and leaves.

The protein resides in the nucleus. Functionally, transcription factor involved in symbiotic nodule signaling in response to rhizobial Nod factors (NFs). Binds to the GCC box (NF-responsive box) of ENOD11 promoter. May act as transcriptional repressor of NF-responsive box-containing target gene promoters in root hairs. The chain is Ethylene-responsive transcription factor ERN3 from Medicago truncatula (Barrel medic).